The following is a 123-amino-acid chain: Large ribosomal subunit protein uL14c (123 aa).

The protein belongs to the universal ribosomal protein uL14 family. Part of the 50S ribosomal subunit.

Its subcellular location is the plastid. It is found in the chloroplast. Binds to 23S rRNA. This is Large ribosomal subunit protein uL14c from Saccharum hybrid (Sugarcane).